Here is a 612-residue protein sequence, read N- to C-terminus: Beta-mannosyltransferase 5 (612 aa).

Residues 1–12 (MVQKQYRFAPKS) lie on the Cytoplasmic side of the membrane. A helical transmembrane segment spans residues 13-33 (IFTFVFLCFVAIVVIISTSSL). Residues 34–612 (VQVEESLDPI…YRAHLKRWQN (579 aa)) are Extracellular-facing. 3 N-linked (GlcNAc...) asparagine glycosylation sites follow: N224, N230, and N480.

This sequence belongs to the BMT family.

Its subcellular location is the membrane. Its function is as follows. Beta-mannosyltransferase involved in cell wall biosynthesis. Required for beta-1,2-mannose transfer on phospholipomannan. The protein is Beta-mannosyltransferase 5 (BMT5) of Candida albicans (strain SC5314 / ATCC MYA-2876) (Yeast).